The primary structure comprises 375 residues: Alcohol dehydrogenase 4, mitochondrial (375 aa).

A mitochondrion-targeting transit peptide spans 1–27; it reads MFRLARAQTALANKASVSRSFLRLNSS. Zn(2+) is bound by residues Cys71, His94, Cys125, Cys128, Cys131, Cys139, and Cys181. Residues 205 to 211, Asp229, Lys234, 296 to 298, and Arg368 each bind NAD(+); these read GAAGGLG and VGL.

Belongs to the zinc-containing alcohol dehydrogenase family. Homotetramer. It depends on Zn(2+) as a cofactor.

The protein localises to the mitochondrion matrix. It carries out the reaction a primary alcohol + NAD(+) = an aldehyde + NADH + H(+). The catalysed reaction is a secondary alcohol + NAD(+) = a ketone + NADH + H(+). The sequence is that of Alcohol dehydrogenase 4, mitochondrial (ADH4) from Kluyveromyces lactis (strain ATCC 8585 / CBS 2359 / DSM 70799 / NBRC 1267 / NRRL Y-1140 / WM37) (Yeast).